Reading from the N-terminus, the 406-residue chain is Probable UDP-arabinose 4-epimerase 3 (406 aa).

The Cytoplasmic portion of the chain corresponds to 1-26 (MIPLNRRASQTRGGMEYFDARRKPHN). The chain crosses the membrane as a helical; Signal-anchor for type II membrane protein span at residues 27–44 (VGKVIAALVLTTLCIFIL). Residues 45-406 (KQSPGFGGSS…KSHPRGYGSN (362 aa)) are Lumenal-facing. 65 to 96 (HVLVTGGAGYIGSHASLRLLKDNYRVTIVDNL) is a binding site for NAD(+). Catalysis depends on Y213, which acts as the Proton acceptor.

It belongs to the NAD(P)-dependent epimerase/dehydratase family. NAD(+) is required as a cofactor.

Its subcellular location is the golgi apparatus. It is found in the golgi stack membrane. The catalysed reaction is UDP-beta-L-arabinopyranose = UDP-alpha-D-xylose. The protein operates within nucleotide-sugar biosynthesis; UDP-L-arabinose biosynthesis; UDP-L-arabinose from UDP-alpha-D-xylose: step 1/1. It participates in cell wall biogenesis; cell wall polysaccharide biosynthesis. This chain is Probable UDP-arabinose 4-epimerase 3 (UEL-3), found in Oryza sativa subsp. japonica (Rice).